The chain runs to 743 residues: Pentatricopeptide repeat-containing protein At2g16880 (743 aa).

PPR repeat units follow at residues 130 to 164 (SKAL…KLKP), 165 to 202 (NLLT…GVSL), 203 to 233 (NVQT…MVSE), 239 to 273 (DNVT…GLVP), 274 to 308 (NRVT…NVLP), 309 to 343 (DLCT…KLQP), 344 to 378 (DVVT…GVKA), 379 to 414 (NQVT…GFSP), 415 to 449 (DIVT…GIKM), 450 to 484 (NTIT…GFIV), 485 to 519 (DEVT…KITP), 520 to 554 (TVST…GLLP), 555 to 589 (DDST…SFKP), 590 to 620 (DNYT…LIEE), 624 to 658 (DTVT…GLEP), and 659 to 689 (DRFT…FSGK).

Belongs to the PPR family. P subfamily.

In Arabidopsis thaliana (Mouse-ear cress), this protein is Pentatricopeptide repeat-containing protein At2g16880.